Here is a 362-residue protein sequence, read N- to C-terminus: C-C chemokine receptor type 10 (362 aa).

Over 1 to 48 (MGTKPTEQVSWGLYSGYDEEAYSVGPLPELCYKADVQAFSRAFQPSVS) the chain is Extracellular. The chain crosses the membrane as a helical span at residues 49–69 (LMVAVLGLAGNGLVLATHLAA). The Cytoplasmic segment spans residues 70–80 (RRTTRSPTSVH). Residues 81–101 (LLQLALADLLLALTLPFAAAG) form a helical membrane-spanning segment. The Extracellular portion of the chain corresponds to 102–115 (ALQGWNLGSTTCRA). Cysteine 113 and cysteine 191 form a disulfide bridge. The helical transmembrane segment at 116 to 136 (ISGLYSASFHAGFLFLACISA) threads the bilayer. At 137–159 (DRYVAIARALPAGQRPSTPSRAH) the chain is on the cytoplasmic side. Residues 160–180 (LVSVFVWLLSLFLALPALLFS) traverse the membrane as a helical segment. The Extracellular portion of the chain corresponds to 181-208 (RDGPREGQRRCRLIFPESLTQTVKGASA). The chain crosses the membrane as a helical span at residues 209 to 229 (VAQVVLGFALPLGVMAACYAL). The Cytoplasmic portion of the chain corresponds to 230-247 (LGRTLLAARGPERRRALR). The helical transmembrane segment at 248–268 (VVVALVVAFVVLQLPYSLALL) threads the bilayer. The Extracellular segment spans residues 269 to 291 (LDTADLLAARERSCSSSKRKDLA). Residues 292–312 (LLVTGGLTLVRCSLNPVLYAF) traverse the membrane as a helical segment. Residues 313–362 (LGLRFRRDLRRLLQGGGCSPKPNPRGRCPRRLRLSSCSAPTETHSLSWDN) lie on the Cytoplasmic side of the membrane.

This sequence belongs to the G-protein coupled receptor 1 family. In terms of tissue distribution, expressed at high levels in small intestine, colon, lymph nodes, Peyer patches and at lower levels in thymus, lung and spleen.

The protein resides in the cell membrane. In terms of biological role, receptor for chemokines SCYA27 and SCYA28. Subsequently transduces a signal by increasing the intracellular calcium ions level. The protein is C-C chemokine receptor type 10 (Ccr10) of Mus musculus (Mouse).